A 651-amino-acid chain; its full sequence is MIVFATILFGALSAEDPDVEKLDSQEFQRAVEERAFALGPEDHAPAGGEGQGAAGHRELRHPVGRAPSGGAGSDLEPGPLKVYDESQKVTGLLKPEGGGEPREFEYSYPEGYDIARVLNEANIPFTTDPQTAGPWARAIAVMAPFVLILLLFFLMTRTGRSASQSSRMTDFGKSRARRMTKDQPKVTFADVAGADEAVQELTEIKEFLENPQKFQKLGARIPKGALLVGPPGTGKTLLARAVAGEAGVPFFSISGSDFVEMFVGVGASRVRDLFEQAKQNSPCIIFVDEIDAVGRQRGAGLGGGHDEREQTLNQLLVEMDGFDSKSGIIMLAATNRPDILDPALLRPGRFDRQIVVDRPDLPGRIKILKVHTRGKPLGEDVDIETIARGTPGFTGADLANLVNEAALLAARHNKEQIEMAEMEEAIDRVIAGPERKTRLISEKEKEITAYHEAGHAIVGALLPEADPVHKVTIIPRGQALGVTMSLPEEDRFMMSRAQLMAQLSYMLGGRAAERVVFEEITTGASNDIERATKVARQMVTRYGMSEKLGLIALGQHDGQVFMGRDLHAQPDYSDEIAFQIDKEIRRLVDEAYDTAEDLLVRNRRLLEKLASDLIEYETVDAEHLRRLVEEYAVDEHPSRGRPAMSVNGHRG.

The Extracellular portion of the chain corresponds to 1–134 (MIVFATILFG…FTTDPQTAGP (134 aa)). Residues 135–155 (WARAIAVMAPFVLILLLFFLM) form a helical membrane-spanning segment. The Cytoplasmic portion of the chain corresponds to 156–651 (TRTGRSASQS…PAMSVNGHRG (496 aa)). An ATP-binding site is contributed by 229–236 (GPPGTGKT). His-451 contributes to the Zn(2+) binding site. Residue Glu-452 is part of the active site. His-455 and Asp-527 together coordinate Zn(2+).

The protein in the central section; belongs to the AAA ATPase family. This sequence in the C-terminal section; belongs to the peptidase M41 family. As to quaternary structure, homohexamer. Zn(2+) is required as a cofactor.

It is found in the cell membrane. Functionally, acts as a processive, ATP-dependent zinc metallopeptidase for both cytoplasmic and membrane proteins. Plays a role in the quality control of integral membrane proteins. The sequence is that of ATP-dependent zinc metalloprotease FtsH from Rubrobacter xylanophilus (strain DSM 9941 / JCM 11954 / NBRC 16129 / PRD-1).